Consider the following 147-residue polypeptide: MFNMNINSPVRFVKETNRAKSPTRQSPYAAGYDLYSAYDYTIPPGERQLIKTDISMSMPKFCYGRIAPRSGLSLKGIDIGGGVIDEDYRGNIGVILINNGKYTFNVNTGDRIAQLIYQRIYYPELKEVQSLDSTDRGDQGFGSTGLR.

Arg24 is a binding site for Mg(2+). DUTP-binding positions include 68-70 (PRS), 82-85 (GVID), Tyr88, Gly93, Ile95, and Arg111.

Belongs to the dUTPase family. Requires Mg(2+) as cofactor.

The enzyme catalyses dUTP + H2O = dUMP + diphosphate + H(+). In terms of biological role, this enzyme is involved in nucleotide metabolism: it produces dUMP, the immediate precursor of thymidine nucleotides and it decreases the intracellular concentration of dUTP so that uracil cannot be incorporated into DNA. The sequence is that of Deoxyuridine 5'-triphosphate nucleotidohydrolase (OPG046) from Homo sapiens (Human).